The sequence spans 917 residues: Dolichyl-phosphooligosaccharide-protein glycotransferase (917 aa).

The segment covering 1–10 (MTENNEKVKN) has biased composition (basic and acidic residues). Positions 1–20 (MTENNEKVKNSDSANNQSSK) are disordered. Residues 1 to 38 (MTENNEKVKNSDSANNQSSKNSKFNFNFEDKKVKCAKT) lie on the Cytoplasmic side of the membrane. The segment covering 11-20 (SDSANNQSSK) has biased composition (low complexity). Residues 39–59 (ILIIIFLAFLSFQMRAQTADM) traverse the membrane as a helical segment. Topologically, residues 60–154 (GFTTNEQYLD…AMDSTVTLMN (95 aa)) are extracellular. The DXD motif 1 motif lies at 82–84 (ALD). Asp-84 serves as a coordination point for Mn(2+). The helical transmembrane segment at 155 to 175 (AAFWVPAILSMFLITPIFFTV) threads the bilayer. Residues 176–182 (RRITSSD) are Cytoplasmic-facing. A helical membrane pass occupies residues 183 to 203 (IGGAVAAILASLSPSIFVKTV). The Extracellular portion of the chain corresponds to 204-209 (AGFSDT). Position 208 (Asp-208) interacts with Mn(2+). The DXD motif 2 signature appears at 208–210 (DTP). The helical transmembrane segment at 210 to 230 (PILEILPLLFIVWFIIEAIHY) threads the bilayer. The Cytoplasmic portion of the chain corresponds to 231-237 (SKEKNYK). The chain crosses the membrane as a helical span at residues 238-260 (SLIYGLLATLMLALYPFMWSAWW). At 261–263 (YGY) the chain is on the extracellular side. A helical membrane pass occupies residues 264-286 (YIVIAFLVIYAIYKGISYNSIAK). At 287–308 (YTKSKNNNHKDKIESEKLEMLN) the chain is on the cytoplasmic side. A helical membrane pass occupies residues 309-329 (ILKISGLFIIGGAVLITALYG). Over 330-372 (VSTTMNALQAPLNYLGLDEVSSQTGWPNVLTTVSELDTASLDE) the chain is Extracellular. Positions 361–364 (TVSE) match the TIXE motif motif. A Mn(2+)-binding site is contributed by Glu-364. The helical transmembrane segment at 373–393 (IISSSLGSIHLFAIGLIGIFL) threads the bilayer. Over 394–413 (SLFRKVLTPVKQISNGLAEK) the chain is Cytoplasmic. The helical transmembrane segment at 414 to 434 (LDIKYALLLIIWFAVTFLAAS) threads the bilayer. The Extracellular segment spans residues 435–438 (KGVR). Arg-438 is a binding site for a glycophospholipid. A helical transmembrane segment spans residues 439–459 (FVALMVPPLSIGVGIFVGFIE). The Cytoplasmic portion of the chain corresponds to 460-469 (QFIKNNLDKK). A helical transmembrane segment spans residues 470–490 (YEYVAYPTIAIIVLYALFTIY). Residues 491–506 (RADSADLVRMLLPSNY) lie on the Extracellular side of the membrane. A helical transmembrane segment spans residues 507–527 (VPIAEGIMLASLAVLIIYKVA). At 528–541 (ELIAESNKKLVMNK) the chain is on the cytoplasmic side. A helical transmembrane segment spans residues 542–562 (IFMILLAIGLITPTIATIVPF). The Extracellular segment spans residues 563-917 (YSVPTYNDGW…FSVDYGNYSK (355 aa)). Residues 592-594 (WWD) are interacts with target acceptor peptide in protein substrate. Residues 592 to 596 (WWDNG) carry the WWDYG motif motif. The MI motif signature appears at 719-726 (MTSIASVW).

The protein belongs to the STT3 family. Mn(2+) serves as cofactor. It depends on Mg(2+) as a cofactor.

The protein localises to the cell membrane. It catalyses the reaction an archaeal dolichyl phosphooligosaccharide + [protein]-L-asparagine = an archaeal dolichyl phosphate + a glycoprotein with the oligosaccharide chain attached by N-beta-D-glycosyl linkage to a protein L-asparagine.. Its pathway is cell surface structure biogenesis; S-layer biogenesis. The protein operates within protein modification; protein glycosylation. Its function is as follows. Oligosaccharyl transferase (OST) that catalyzes the initial transfer of a defined glycan (ManNAcGlc-2,3-diNAcAGlcNAc in M.voltae) from the lipid carrier dolichol-monophosphate to an asparagine residue within an Asn-X-Ser/Thr consensus motif in nascent polypeptide chains, the first step in protein N-glycosylation. Involved in the assembly of an N-linked disaccharide that decorates the S-layer glycoprotein and flagellins. This chain is Dolichyl-phosphooligosaccharide-protein glycotransferase, found in Methanococcus voltae.